The chain runs to 153 residues: Lipoprotein signal peptidase (153 aa).

Helical transmembrane passes span 52–72 (ILAG…IGIV) and 81–101 (GQML…GNFI). Active-site residues include D111 and D129. The helical transmembrane segment at 124 to 144 (IFNIADSSLCVGVILLFIHML) threads the bilayer.

It belongs to the peptidase A8 family.

The protein localises to the cell membrane. It carries out the reaction Release of signal peptides from bacterial membrane prolipoproteins. Hydrolyzes -Xaa-Yaa-Zaa-|-(S,diacylglyceryl)Cys-, in which Xaa is hydrophobic (preferably Leu), and Yaa (Ala or Ser) and Zaa (Gly or Ala) have small, neutral side chains.. The protein operates within protein modification; lipoprotein biosynthesis (signal peptide cleavage). This protein specifically catalyzes the removal of signal peptides from prolipoproteins. The protein is Lipoprotein signal peptidase of Bacillus velezensis (strain DSM 23117 / BGSC 10A6 / LMG 26770 / FZB42) (Bacillus amyloliquefaciens subsp. plantarum).